Reading from the N-terminus, the 644-residue chain is DNA gyrase subunit B (644 aa).

One can recognise a Toprim domain in the interval 429–543; that stretch reads CEIFLVEGDS…AGYVYIAQPP (115 aa). The Mg(2+) site is built by Glu435, Asp508, and Asp510.

This sequence belongs to the type II topoisomerase GyrB family. Heterotetramer, composed of two GyrA and two GyrB chains. In the heterotetramer, GyrA contains the active site tyrosine that forms a transient covalent intermediate with DNA, while GyrB binds cofactors and catalyzes ATP hydrolysis. Mg(2+) serves as cofactor. The cofactor is Mn(2+). It depends on Ca(2+) as a cofactor.

It localises to the cytoplasm. It catalyses the reaction ATP-dependent breakage, passage and rejoining of double-stranded DNA.. Its function is as follows. A type II topoisomerase that negatively supercoils closed circular double-stranded (ds) DNA in an ATP-dependent manner to modulate DNA topology and maintain chromosomes in an underwound state. Negative supercoiling favors strand separation, and DNA replication, transcription, recombination and repair, all of which involve strand separation. Also able to catalyze the interconversion of other topological isomers of dsDNA rings, including catenanes and knotted rings. Type II topoisomerases break and join 2 DNA strands simultaneously in an ATP-dependent manner. The chain is DNA gyrase subunit B from Staphylococcus aureus (strain USA300).